The following is a 297-amino-acid chain: Protoheme IX farnesyltransferase (297 aa).

9 helical membrane passes run 12–32 (PGII…AAKG), 36–56 (YALF…GCVF), 85–105 (VSLV…YLAA), 108–128 (LAMW…SLYM), 133–153 (VYGT…GYCA), 163–183 (LILL…IAIF), 209–229 (ITLY…SGYA), 230–250 (GYKY…MALQ), and 266–286 (FIFS…DFMV).

Belongs to the UbiA prenyltransferase family. Protoheme IX farnesyltransferase subfamily.

The protein localises to the cell inner membrane. The enzyme catalyses heme b + (2E,6E)-farnesyl diphosphate + H2O = Fe(II)-heme o + diphosphate. The protein operates within porphyrin-containing compound metabolism; heme O biosynthesis; heme O from protoheme: step 1/1. In terms of biological role, converts heme B (protoheme IX) to heme O by substitution of the vinyl group on carbon 2 of heme B porphyrin ring with a hydroxyethyl farnesyl side group. The sequence is that of Protoheme IX farnesyltransferase from Sodalis glossinidius (strain morsitans).